A 271-amino-acid chain; its full sequence is Solute carrier family 66 member 2 (271 aa).

3 consecutive transmembrane segments (helical) span residues 7–27 (GWLL…AMVF), 49–69 (FSTH…LFWF), and 72–92 (HFES…LLML). The PQ-loop 1 domain maps to 14-80 (HQLVSWVAAG…RHFESPLLWQ (67 aa)). Position 110 is a phosphoserine (S110). 3 helical membrane-spanning segments follow: residues 143-163 (FADY…ITYL), 168-188 (ALFV…LGVP), and 232-252 (VCGL…YAFA). Positions 149–215 (CVLAFTGVAG…MVLMWTSGDT (67 aa)) constitute a PQ-loop 2 domain.

The protein localises to the membrane. The sequence is that of Solute carrier family 66 member 2 (Slc66a2) from Rattus norvegicus (Rat).